The following is a 501-amino-acid chain: DNA nucleotidylexotransferase (501 aa).

The short motif at 11–17 (KKRKRPV) is the Nuclear localization signal element. Residues 24 to 121 (QVEVKFKEVT…RPVRVETRHS (98 aa)) enclose the BRCT domain. The involved in DNA binding stretch occupies residues 249 to 253 (VGPKT). A 2'-deoxyribonucleoside 5'-triphosphate contacts are provided by residues 324 to 329 (GFRRGK) and 333 to 336 (HDVD). Positions 334, 336, and 426 each coordinate Mg(2+). An a 2'-deoxyribonucleoside 5'-triphosphate-binding site is contributed by 441–442 (GW).

Belongs to the DNA polymerase type-X family. Mg(2+) is required as a cofactor.

Its subcellular location is the nucleus. It catalyses the reaction DNA(n) + a 2'-deoxyribonucleoside 5'-triphosphate = DNA(n+1) + diphosphate. Its function is as follows. Template-independent DNA polymerase which catalyzes the random addition of deoxynucleoside 5'-triphosphate to the 3'-end of a DNA initiator. One of the in vivo functions of this enzyme is the addition of nucleotides at the junction (N region) of rearranged Ig heavy chain and T-cell receptor gene segments during the maturation of B- and T-cells. This Oncorhynchus mykiss (Rainbow trout) protein is DNA nucleotidylexotransferase (dntt).